The chain runs to 70 residues: MPQEIKEVKDFLIKARRKDARAVKIKKNETNTKFKIRCSRYLYTLVVKDMEKAEKLKQSLPPGLQVKEVK.

The protein belongs to the eukaryotic ribosomal protein eL38 family.

The chain is Large ribosomal subunit protein eL38 (RpL38) from Anopheles gambiae (African malaria mosquito).